The sequence spans 84 residues: Small ribosomal subunit protein bS20 (84 aa).

The disordered stretch occupies residues methionine 1–isoleucine 32.

It belongs to the bacterial ribosomal protein bS20 family.

Its function is as follows. Binds directly to 16S ribosomal RNA. The sequence is that of Small ribosomal subunit protein bS20 from Salinibacter ruber (strain DSM 13855 / M31).